The chain runs to 239 residues: Geranylgeranylglyceryl phosphate synthase (239 aa).

Residues D19 and S48 each coordinate Mg(2+). Sn-glycerol 1-phosphate-binding positions include 167 to 173, 197 to 198, and 219 to 220; these read YLEAGSG, GG, and GT.

It belongs to the GGGP/HepGP synthase family. Group II subfamily. Mg(2+) is required as a cofactor.

The protein resides in the cytoplasm. The catalysed reaction is sn-glycerol 1-phosphate + (2E,6E,10E)-geranylgeranyl diphosphate = sn-3-O-(geranylgeranyl)glycerol 1-phosphate + diphosphate. It functions in the pathway membrane lipid metabolism; glycerophospholipid metabolism. Prenyltransferase that catalyzes the transfer of the geranylgeranyl moiety of geranylgeranyl diphosphate (GGPP) to the C3 hydroxyl of sn-glycerol-1-phosphate (G1P). This reaction is the first ether-bond-formation step in the biosynthesis of archaeal membrane lipids. The sequence is that of Geranylgeranylglyceryl phosphate synthase from Methanopyrus kandleri (strain AV19 / DSM 6324 / JCM 9639 / NBRC 100938).